The following is a 379-amino-acid chain: DNA replication and repair protein RecF (379 aa).

Residue 30–37 (GDNAQGKS) participates in ATP binding.

The protein belongs to the RecF family.

The protein resides in the cytoplasm. In terms of biological role, the RecF protein is involved in DNA metabolism; it is required for DNA replication and normal SOS inducibility. RecF binds preferentially to single-stranded, linear DNA. It also seems to bind ATP. This is DNA replication and repair protein RecF from Thermosynechococcus vestitus (strain NIES-2133 / IAM M-273 / BP-1).